Consider the following 97-residue polypeptide: U-scoloptoxin(10)-Sa2a (97 aa).

The signal sequence occupies residues methionine 1–alanine 23.

The protein belongs to the scoloptoxin-10 family. Contains 3 disulfide bonds. As to expression, expressed by the venom gland.

It localises to the secreted. In Scolopendra alternans (Florida Keys giant centipede), this protein is U-scoloptoxin(10)-Sa2a.